We begin with the raw amino-acid sequence, 77 residues long: Conodipine-M alpha chain (77 aa).

Glutamine 1 bears the Pyrrolidone carboxylic acid mark. Histidine 36 is an active-site residue.

As to quaternary structure, heterodimer of an alpha and a beta chains; probably disulfide-linked. It depends on Ca(2+) as a cofactor. As to expression, expressed by the venom duct.

The protein resides in the secreted. The catalysed reaction is a 1,2-diacyl-sn-glycero-3-phosphocholine + H2O = a 1-acyl-sn-glycero-3-phosphocholine + a fatty acid + H(+). With respect to regulation, inhibited by linoleoyl amide and MG14. Its function is as follows. Heterodimer: conodipine-M catalyzes the calcium-dependent hydrolysis of the 2-acyl groups in 3-sn-phosphoglycerides. This activity may be supported by the alpha chain. Conodipine-M inhibits the binding of isradipine (a ligand specific for L-type calcium channel) to L-type calcium channels. The chain is Conodipine-M alpha chain from Conus magus (Magical cone).